A 335-amino-acid polypeptide reads, in one-letter code: Dolichyl-diphosphooligosaccharide--protein glycosyltransferase subunit MAGT1 (335 aa).

A signal peptide spans 1-29 (MAARWRFWCVSVTMVVALLIVCDVPSASA). Topologically, residues 30–184 (QRKKEMVLSE…DVNIRVIRPP (155 aa)) are extracellular. In terms of domain architecture, Thioredoxin spans 47–175 (WTNKRPVIRM…IARWIADRTD (129 aa)). N-linked (GlcNAc...) asparagine glycosylation occurs at asparagine 71. Cysteine 87 and cysteine 90 form a disulfide bridge. The helical transmembrane segment at 185–205 (NYAGPLMLGLLLAVIGGLVYL) threads the bilayer. The Cytoplasmic segment spans residues 206–209 (RRSN). The helical transmembrane segment at 210–230 (MEFLFNKTGWAFAALCFVLAM) threads the bilayer. Over 231–270 (TSGQMWNHIRGPPYAHKNPHTGHVNYIHGSSQAQFVAETH) the chain is Extracellular. Residues 271–291 (IVLLFNGGVTLGMVLLCEAAT) form a helical membrane-spanning segment. Residues 292-300 (SDMDIGKRK) are Cytoplasmic-facing. Residues 301-321 (IMCVAGIGLVVLFFSWMLSIF) form a helical membrane-spanning segment. At 322–335 (RSKYHGYPYSFLMS) the chain is on the extracellular side.

Belongs to the OST3/OST6 family. Accessory component of the STT3B-containing form of the oligosaccharyltransferase (OST) complex. OST exists in two different complex forms which contain common core subunits RPN1, RPN2, OST48, OST4, DAD1 and TMEM258, either STT3A or STT3B as catalytic subunits, and form-specific accessory subunits. OST can form stable complexes with the Sec61 complex or with both the Sec61 and TRAP complexes. The association of TUSC3 or MAGT1 with the STT3B-containing complex seems to be mutually exclusvice. Ubiquitous. Expressed at very low levels in brain, lung and kidney.

It is found in the cell membrane. Its subcellular location is the endoplasmic reticulum. The protein localises to the endoplasmic reticulum membrane. The protein operates within protein modification; protein glycosylation. Functionally, accessory component of the STT3B-containing form of the N-oligosaccharyl transferase (OST) complex which catalyzes the transfer of a high mannose oligosaccharide from a lipid-linked oligosaccharide donor to an asparagine residue within an Asn-X-Ser/Thr consensus motif in nascent polypeptide chains. Involved in N-glycosylation of STT3B-dependent substrates. Specifically required for the glycosylation of a subset of acceptor sites that are near cysteine residues; in this function seems to act redundantly with TUSC3. In its oxidized form proposed to form transient mixed disulfides with a glycoprotein substrate to facilitate access of STT3B to the unmodified acceptor site. Also has oxidoreductase-independent functions in the STT3B-containing OST complex possibly involving substrate recognition. Could indirectly play a role in Mg(2+) transport in epithelial cells. The protein is Dolichyl-diphosphooligosaccharide--protein glycosyltransferase subunit MAGT1 of Homo sapiens (Human).